The primary structure comprises 173 residues: Ribosome maturation factor RimM (173 aa).

The PRC barrel domain occupies 94 to 173 (EGEFYWRDLI…TIEVDWDPGF (80 aa)).

The protein belongs to the RimM family. In terms of assembly, binds ribosomal protein uS19.

Its subcellular location is the cytoplasm. Its function is as follows. An accessory protein needed during the final step in the assembly of 30S ribosomal subunit, possibly for assembly of the head region. Essential for efficient processing of 16S rRNA. May be needed both before and after RbfA during the maturation of 16S rRNA. It has affinity for free ribosomal 30S subunits but not for 70S ribosomes. This is Ribosome maturation factor RimM from Aeromonas salmonicida (strain A449).